Reading from the N-terminus, the 380-residue chain is 4-hydroxy-3-methylbut-2-en-1-yl diphosphate synthase (flavodoxin) (380 aa).

The [4Fe-4S] cluster site is built by Cys275, Cys278, Cys310, and Glu317.

The protein belongs to the IspG family. [4Fe-4S] cluster serves as cofactor.

The enzyme catalyses (2E)-4-hydroxy-3-methylbut-2-enyl diphosphate + oxidized [flavodoxin] + H2O + 2 H(+) = 2-C-methyl-D-erythritol 2,4-cyclic diphosphate + reduced [flavodoxin]. The protein operates within isoprenoid biosynthesis; isopentenyl diphosphate biosynthesis via DXP pathway; isopentenyl diphosphate from 1-deoxy-D-xylulose 5-phosphate: step 5/6. In terms of biological role, converts 2C-methyl-D-erythritol 2,4-cyclodiphosphate (ME-2,4cPP) into 1-hydroxy-2-methyl-2-(E)-butenyl 4-diphosphate. The sequence is that of 4-hydroxy-3-methylbut-2-en-1-yl diphosphate synthase (flavodoxin) from Hyphomonas neptunium (strain ATCC 15444).